We begin with the raw amino-acid sequence, 118 residues long: Cell division protein FtsB (118 aa).

At 1-6 (MRNWRW) the chain is on the cytoplasmic side. Residues 7 to 24 (LLLVLAALLAWLQHRFWF) traverse the membrane as a helical segment. The Periplasmic portion of the chain corresponds to 25 to 118 (GPGNSGEVRM…DLSQPRREKR (94 aa)). The stretch at 30–66 (GEVRMLQVQIVQQHQENERLRQRNASLAAEVKNLKDG) forms a coiled coil. Residues 98 to 118 (LPNDTSADHGVDLSQPRREKR) are disordered. Positions 103–118 (SADHGVDLSQPRREKR) are enriched in basic and acidic residues.

Belongs to the FtsB family. As to quaternary structure, part of a complex composed of FtsB, FtsL and FtsQ.

The protein localises to the cell inner membrane. Essential cell division protein. May link together the upstream cell division proteins, which are predominantly cytoplasmic, with the downstream cell division proteins, which are predominantly periplasmic. This chain is Cell division protein FtsB, found in Xylella fastidiosa (strain M12).